Consider the following 209-residue polypeptide: Uracil phosphoribosyltransferase (209 aa).

5-phospho-alpha-D-ribose 1-diphosphate is bound by residues R79, R104, and 131–139 (DPMLATGGS). Uracil-binding positions include I194 and 199-201 (GDA). D200 lines the 5-phospho-alpha-D-ribose 1-diphosphate pocket.

Belongs to the UPRTase family. The cofactor is Mg(2+).

It carries out the reaction UMP + diphosphate = 5-phospho-alpha-D-ribose 1-diphosphate + uracil. The protein operates within pyrimidine metabolism; UMP biosynthesis via salvage pathway; UMP from uracil: step 1/1. With respect to regulation, allosterically activated by GTP. Catalyzes the conversion of uracil and 5-phospho-alpha-D-ribose 1-diphosphate (PRPP) to UMP and diphosphate. The protein is Uracil phosphoribosyltransferase of Clostridium perfringens (strain ATCC 13124 / DSM 756 / JCM 1290 / NCIMB 6125 / NCTC 8237 / Type A).